Consider the following 372-residue polypeptide: MTFDSANASKPLSVVLAGGGTAGHVSPLLAIADAIREKRPEAAILAVGTPSGMETRLVPAAGYELATIDRVPFPRRPSADLVKLPARLSGAVRQARRILEEARADVLVGVGGYVCTPMYLAARKLRIPIVIHEANMKAGLANRVGARFSNHVAVAFAGTRLRGARHVGMPMRRAISGLDRAVAAPAARAALGLDAQRPALIVTGGSSGALSINRAITAALPALAAAGVQTLHITGNGKAVKDDDGGLLTADGYRQVEYVDGMENVYAAADVLLARAGAGTVSEVAAVGVPAVFVPLPIGNGEQALNAAPLVAAGGAVMVDDKDLSPEWLRSELIPLLTDRSRLNEMARKSEALGIRNADQRMADLVLEAVSA.

UDP-N-acetyl-alpha-D-glucosamine-binding positions include 21 to 23 (TAG), N135, R172, S206, and Q303.

It belongs to the glycosyltransferase 28 family. MurG subfamily.

The protein localises to the cell membrane. The catalysed reaction is di-trans,octa-cis-undecaprenyl diphospho-N-acetyl-alpha-D-muramoyl-L-alanyl-D-glutamyl-meso-2,6-diaminopimeloyl-D-alanyl-D-alanine + UDP-N-acetyl-alpha-D-glucosamine = di-trans,octa-cis-undecaprenyl diphospho-[N-acetyl-alpha-D-glucosaminyl-(1-&gt;4)]-N-acetyl-alpha-D-muramoyl-L-alanyl-D-glutamyl-meso-2,6-diaminopimeloyl-D-alanyl-D-alanine + UDP + H(+). The protein operates within cell wall biogenesis; peptidoglycan biosynthesis. Its function is as follows. Cell wall formation. Catalyzes the transfer of a GlcNAc subunit on undecaprenyl-pyrophosphoryl-MurNAc-pentapeptide (lipid intermediate I) to form undecaprenyl-pyrophosphoryl-MurNAc-(pentapeptide)GlcNAc (lipid intermediate II). This chain is UDP-N-acetylglucosamine--N-acetylmuramyl-(pentapeptide) pyrophosphoryl-undecaprenol N-acetylglucosamine transferase, found in Paenarthrobacter aurescens (strain TC1).